We begin with the raw amino-acid sequence, 377 residues long: Prostaglandin E synthase 2 (377 aa).

The Lumenal segment spans residues 1–65; it reads MAAACTRTLG…LAAPVRGSGR (65 aa). The chain crosses the membrane as a helical span at residues 66 to 83; sequence VLGCAFLLGGGFGLYQTI. A GST N-terminal domain is found at 105-182; that stretch reads LKLTLYQYKT…ALKTYISSKD (78 aa). Glutathione is bound by residues Val153 and 166 to 167; that span reads DS. Residues 266-377 form the GST C-terminal domain; that stretch reads YIVREGKFGS…RMQKATQHVS (112 aa).

It belongs to the GST superfamily. In terms of assembly, homodimer.

The protein localises to the golgi apparatus membrane. The enzyme catalyses prostaglandin H2 = prostaglandin E2. The catalysed reaction is prostaglandin H2 = (12S)-hydroxy-(5Z,8E,10E)-heptadecatrienoate + malonaldehyde. Its pathway is lipid metabolism; prostaglandin biosynthesis. Isomerase activity is increased by sulfhydril compounds. Dithiothreitol (DTT) is most effective, followed by glutathione (GSH) and 2-mercaptoethanol. Its function is as follows. Isomerase that catalyzes the conversion of PGH2 into the more stable prostaglandin E2 (PGE2) (in vitro). The biological function and the GSH-dependent property of PTGES2 is still under debate. In vivo, PTGES2 could form a complex with GSH and heme and would not participate in PGE2 synthesis but would catalyze the degradation of prostaglandin E2 H2 (PGH2) to 12(S)-hydroxy-5(Z),8(E),10(E)-heptadecatrienoic acid (HHT) and malondialdehyde (MDA). This is Prostaglandin E synthase 2 (ptges2) from Danio rerio (Zebrafish).